The chain runs to 315 residues: Cytochrome c biogenesis protein CcsA (315 aa).

Transmembrane regions (helical) follow at residues Val-14 to Trp-34, Ile-72 to Phe-92, Ile-101 to Leu-121, Val-146 to Leu-166, Ser-221 to Asn-241, Thr-255 to Leu-272, and Ala-282 to Leu-302.

This sequence belongs to the CcmF/CycK/Ccl1/NrfE/CcsA family. As to quaternary structure, may interact with ccs1.

It is found in the cellular thylakoid membrane. Functionally, required during biogenesis of c-type cytochromes (cytochrome c6 and cytochrome f) at the step of heme attachment. The polypeptide is Cytochrome c biogenesis protein CcsA (Prochlorococcus marinus (strain NATL1A)).